Here is a 49-residue protein sequence, read N- to C-terminus: uncharacterized protein (49 aa).

A helical transmembrane segment spans residues 16 to 36 (WTCHTGFYLMILLVLFFMYGF).

Its subcellular location is the cell membrane. This is an uncharacterized protein from Bacillus subtilis (strain 168).